The sequence spans 226 residues: MTILVVTGTGTGVGKTVVCAALASAARQAGIDVAVCKPVQTGTARGDDDLAEVGRLAGVTQLAGLARYPQPMAPAAAAEHAGMALPARDQIVRLIADLDRPGRLTLVEGAGGLLVELAEPGVTLRDVAVDVAAAALVVVTADLGTLNHTKLTLEALAAQQVSCAGLVIGSWPDPPGLVAASNRSALARIATVRAALPAGAASLDAGDFAAMSAAAFDRNWVAGLVG.

Position 12–17 (12–17) interacts with ATP; it reads GVGKTV. Residue Thr16 coordinates Mg(2+). Lys37 is an active-site residue. Thr41 is a substrate binding site. ATP is bound by residues Asp49, 108–111, 169–170, and 197–199; these read EGAG, GS, and PAG. Asp49 and Glu108 together coordinate Mg(2+).

It belongs to the dethiobiotin synthetase family. Homodimer. Requires Mg(2+) as cofactor.

The protein resides in the cytoplasm. It catalyses the reaction (7R,8S)-7,8-diammoniononanoate + CO2 + ATP = (4R,5S)-dethiobiotin + ADP + phosphate + 3 H(+). It functions in the pathway cofactor biosynthesis; biotin biosynthesis; biotin from 7,8-diaminononanoate: step 1/2. In terms of biological role, catalyzes a mechanistically unusual reaction, the ATP-dependent insertion of CO2 between the N7 and N8 nitrogen atoms of 7,8-diaminopelargonic acid (DAPA, also called 7,8-diammoniononanoate) to form a ureido ring. This chain is ATP-dependent dethiobiotin synthetase BioD, found in Mycobacterium bovis (strain ATCC BAA-935 / AF2122/97).